The sequence spans 374 residues: MNRLALYCRPGFEKECAAEITDKAAALEVYGFARVKENSGYVLFECYQPDDADTLARKLPFRELIFARQMLVVGELLKDLPPEDRIAPICGMLLGVVEGGGELRVEVPDTNESKELLKFCRKFTVPLRAALREQRTLLRQENPYRPVVHVLFIAPGCCYVGYSYSDNNSPFYMGIPRLKFPADAPSRSTLKLEEAFHVFIPADEWDERLGSGMRAVDLGACPGGWTYQLVQRSMMVQAIDNGPMVPSLMETGQVTHHRADGFRFTPEGDNDWLVCDMVEKPAKVSALMARWLVNGWCREAIFNLKLPMKKRYEEVSQNLATLAQVLKENGINAQIAAKQLYHDREEVTVHVRRIWGAIPGRRDEREFRRREQRD.

S-adenosyl-L-methionine-binding positions include S188, 221 to 224, D240, D260, and D276; that span reads CPGG. Residue K305 is the Proton acceptor of the active site.

This sequence belongs to the class I-like SAM-binding methyltransferase superfamily. RNA methyltransferase RlmE family. RlmM subfamily. Monomer.

The protein resides in the cytoplasm. It carries out the reaction cytidine(2498) in 23S rRNA + S-adenosyl-L-methionine = 2'-O-methylcytidine(2498) in 23S rRNA + S-adenosyl-L-homocysteine + H(+). Its function is as follows. Catalyzes the 2'-O-methylation at nucleotide C2498 in 23S rRNA. In Edwardsiella ictaluri (strain 93-146), this protein is Ribosomal RNA large subunit methyltransferase M.